The sequence spans 387 residues: 4-hydroxy-3-methylbut-2-en-1-yl diphosphate synthase (flavodoxin) (387 aa).

[4Fe-4S] cluster is bound by residues Cys-293, Cys-296, Cys-328, and Glu-335.

The protein belongs to the IspG family. Requires [4Fe-4S] cluster as cofactor.

The enzyme catalyses (2E)-4-hydroxy-3-methylbut-2-enyl diphosphate + oxidized [flavodoxin] + H2O + 2 H(+) = 2-C-methyl-D-erythritol 2,4-cyclic diphosphate + reduced [flavodoxin]. The protein operates within isoprenoid biosynthesis; isopentenyl diphosphate biosynthesis via DXP pathway; isopentenyl diphosphate from 1-deoxy-D-xylulose 5-phosphate: step 5/6. In terms of biological role, converts 2C-methyl-D-erythritol 2,4-cyclodiphosphate (ME-2,4cPP) into 1-hydroxy-2-methyl-2-(E)-butenyl 4-diphosphate. The protein is 4-hydroxy-3-methylbut-2-en-1-yl diphosphate synthase (flavodoxin) of Treponema denticola (strain ATCC 35405 / DSM 14222 / CIP 103919 / JCM 8153 / KCTC 15104).